The chain runs to 295 residues: MRIAILSQGPQLYSTKRLVEAAQARGHDVHIINPLKCYMNINMRQPSIHIAGKELPQFDAVIPRIGASITFYGSAVLRQFEMMGVYTINDSVGISRSRDKLRSMQLLSRKGIGLPITGFANKPSDIPDLIDMVGGAPLVVKLLEGTQGIGVVLAETRKAAESVLEAFMGLKANIMVQEYIKEANGADIRCFVLGDKVIAAMKRQAKAGEFRSNLHRGGTATLVKLSPEERTTAIRAAKTMGLSLAGVDLLRSNHGPVVMEVNSSPGLEGIEAATQKDVANAIIEFIEKNANKAKS.

The 184-residue stretch at 104–287 (MQLLSRKGIG…VANAIIEFIE (184 aa)) folds into the ATP-grasp domain. ATP-binding positions include Lys141, 178-179 (EY), Asp187, and 211-213 (RSN). Mg(2+) contacts are provided by Asp248, Glu260, and Asn262. Mn(2+)-binding residues include Asp248, Glu260, and Asn262.

The protein belongs to the RimK family. Requires Mg(2+) as cofactor. Mn(2+) serves as cofactor.

This chain is Probable alpha-L-glutamate ligase 1, found in Shewanella denitrificans (strain OS217 / ATCC BAA-1090 / DSM 15013).